Consider the following 105-residue polypeptide: Replication initiation control protein YabA (105 aa).

Zn(2+)-binding residues include histidine 79, cysteine 81, cysteine 95, and cysteine 98.

The protein belongs to the YabA family. As to quaternary structure, homotetramer. Interacts with both DnaA and DnaN, acting as a bridge between these two proteins. Zn(2+) serves as cofactor.

The protein localises to the cytoplasm. Its subcellular location is the nucleoid. Functionally, involved in control of chromosome replication initiation. Inhibits the cooperative binding of DnaA to the oriC region, thus negatively regulating initiation of chromosome replication. Inhibits the ability of DnaA-ATP to form a helix on DNA; does not disassemble preformed DnaA-DNA helices. Decreases the residence time of DnaA on the chromosome at its binding sites (oriC, replication forks and promoter-binding sites). Tethers DnaA to the replication machinery via the DNA polymerase beta sliding clamp subunit (dnaN). Associates with oriC and other DnaA targets on the chromosome in a DnaA-dependent manner. In Streptococcus sanguinis (strain SK36), this protein is Replication initiation control protein YabA.